Here is a 199-residue protein sequence, read N- to C-terminus: ATP-dependent Clp protease proteolytic subunit 2 (199 aa).

Ser98 acts as the Nucleophile in catalysis. Residue His123 is part of the active site.

It belongs to the peptidase S14 family. As to quaternary structure, fourteen ClpP subunits assemble into 2 heptameric rings which stack back to back to give a disk-like structure with a central cavity, resembling the structure of eukaryotic proteasomes.

The protein resides in the cytoplasm. The enzyme catalyses Hydrolysis of proteins to small peptides in the presence of ATP and magnesium. alpha-casein is the usual test substrate. In the absence of ATP, only oligopeptides shorter than five residues are hydrolyzed (such as succinyl-Leu-Tyr-|-NHMec, and Leu-Tyr-Leu-|-Tyr-Trp, in which cleavage of the -Tyr-|-Leu- and -Tyr-|-Trp bonds also occurs).. Functionally, cleaves peptides in various proteins in a process that requires ATP hydrolysis. Has a chymotrypsin-like activity. Plays a major role in the degradation of misfolded proteins. This Corynebacterium efficiens (strain DSM 44549 / YS-314 / AJ 12310 / JCM 11189 / NBRC 100395) protein is ATP-dependent Clp protease proteolytic subunit 2.